We begin with the raw amino-acid sequence, 629 residues long: tRNA uridine 5-carboxymethylaminomethyl modification enzyme MnmG (629 aa).

13–18 lines the FAD pocket; sequence GGGHAG. 273-287 is a binding site for NAD(+); the sequence is GPRYCPSIEDKIHRF.

The protein belongs to the MnmG family. Homodimer. Heterotetramer of two MnmE and two MnmG subunits. It depends on FAD as a cofactor.

It localises to the cytoplasm. Functionally, NAD-binding protein involved in the addition of a carboxymethylaminomethyl (cmnm) group at the wobble position (U34) of certain tRNAs, forming tRNA-cmnm(5)s(2)U34. The polypeptide is tRNA uridine 5-carboxymethylaminomethyl modification enzyme MnmG (Shewanella denitrificans (strain OS217 / ATCC BAA-1090 / DSM 15013)).